A 1050-amino-acid polypeptide reads, in one-letter code: Atrial natriuretic peptide receptor 2 (1050 aa).

Residues 1-19 form the signal peptide; sequence MDLGHSLFVVFTCFLMARC. The Extracellular portion of the chain corresponds to 20 to 460; the sequence is RTEIGKNITV…FCNEDQLPVL (441 aa). Asn-26 and Asn-74 each carry an N-linked (GlcNAc...) asparagine glycan. A disulfide bridge links Cys-84 with Cys-110. Residues Asn-169, Asn-203, Asn-285, Asn-352, Asn-366, and Asn-415 are each glycosylated (N-linked (GlcNAc...) asparagine). An intrachain disulfide couples Cys-236 to Cys-339. The chain crosses the membrane as a helical span at residues 461-481; the sequence is GIVAVGSGLALIIFGISSFLI. Topologically, residues 482 to 1050 are cytoplasmic; sequence YRKLKLEKEL…LGEKTDVYVI (569 aa). Positions 517 to 790 constitute a Protein kinase domain; sequence SRLTISQRGS…PDFSYIKIFV (274 aa). A Guanylate cyclase domain is found at 865 to 995; the sequence is TIYFSDIVGF…DTVNTASRME (131 aa).

The protein belongs to the adenylyl cyclase class-4/guanylyl cyclase family. In terms of processing, phosphorylated. Phosphorylation of the protein kinase-like domain is required for full activation by CNP. Post-translationally, glycosylated. As to expression, high levels found in liver, atrium and gill. Moderate levels found in brain and ventricle, and low levels in esophageal sphincter, stomach, posterior intestine and kidney.

The protein resides in the cell membrane. The enzyme catalyses GTP = 3',5'-cyclic GMP + diphosphate. Receptor for the C-type natriuretic peptide NPPC/CNP hormone. Has guanylate cyclase activity upon binding of its ligand. May play a role in the regulation of skeletal growth. The protein is Atrial natriuretic peptide receptor 2 (npr2) of Anguilla japonica (Japanese eel).